We begin with the raw amino-acid sequence, 550 residues long: Acidic amino acid decarboxylase GADL1 (550 aa).

Position 362 is an N6-(pyridoxal phosphate)lysine (Lys-362).

The protein belongs to the group II decarboxylase family. Homodimer. Pyridoxal 5'-phosphate serves as cofactor. In terms of tissue distribution, expressed in skeletal muscles and kidney (at protein level). Expressed in skeletal muscle and weakly in brain. Not expressed in liver or kidney. Expressed in brain, olfactory bulb, liver, muscle and kidney with the highest expression in olfactory bulb and almost not detected in liver (at protein level).

It carries out the reaction L-aspartate + H(+) = beta-alanine + CO2. The enzyme catalyses 3-sulfino-L-alanine + H(+) = hypotaurine + CO2. The catalysed reaction is L-cysteate + H(+) = taurine + CO2. With respect to regulation, activated weakly by 0.2-0.4 mM Li(+). Inhibited by bis-carboxymethyl-trithiocarbonate, ethylxanthogenacetic acid and 2,5-disulfoaniline. In terms of biological role, catalyzes the decarboxylation of L-aspartate, 3-sulfino-L-alanine (cysteine sulfinic acid), and L-cysteate to beta-alanine, hypotaurine and taurine, respectively. The preferred substrate is L-aspartate. Does not exhibit any decarboxylation activity toward glutamate. The chain is Acidic amino acid decarboxylase GADL1 from Mus musculus (Mouse).